Reading from the N-terminus, the 427-residue chain is Light-independent protochlorophyllide reductase subunit N (427 aa).

Residues C30, C55, and C116 each contribute to the [4Fe-4S] cluster site.

This sequence belongs to the BchN/ChlN family. Protochlorophyllide reductase is composed of three subunits; BchL, BchN and BchB. Forms a heterotetramer of two BchB and two BchN subunits. [4Fe-4S] cluster serves as cofactor.

It carries out the reaction chlorophyllide a + oxidized 2[4Fe-4S]-[ferredoxin] + 2 ADP + 2 phosphate = protochlorophyllide a + reduced 2[4Fe-4S]-[ferredoxin] + 2 ATP + 2 H2O. The protein operates within porphyrin-containing compound metabolism; bacteriochlorophyll biosynthesis (light-independent). In terms of biological role, component of the dark-operative protochlorophyllide reductase (DPOR) that uses Mg-ATP and reduced ferredoxin to reduce ring D of protochlorophyllide (Pchlide) to form chlorophyllide a (Chlide). This reaction is light-independent. The NB-protein (BchN-BchB) is the catalytic component of the complex. This is Light-independent protochlorophyllide reductase subunit N from Rhodopseudomonas palustris (strain BisA53).